The following is a 98-amino-acid chain: 10 kDa chaperonin (98 aa).

The protein belongs to the GroES chaperonin family. Forms stable complexes with CPN60 in the presence of ATP.

The protein resides in the cytoplasm. Functionally, seems to function only as a co-chaperone, along with cpn60, and in certain cases is essential for the discharge of biologically active proteins from cpn60. This is 10 kDa chaperonin from Brassica napus (Rape).